Reading from the N-terminus, the 1251-residue chain is Immunoglobulin-like and fibronectin type III domain-containing protein 1 (1251 aa).

An Ig-like 1 domain is found at 29–119 (PDFEQKPVTS…GEAACSVRLT (91 aa)). A disordered region spans residues 61 to 81 (RWQNSKGDLSDSSKYKISSSP). A coiled-coil region spans residues 188 to 221 (IVDYRGMLRRLQEMKKEQEDKMAQYINTISSLRH). The region spanning 309–398 (PRVVVPLAET…SSAWLVVEAG (90 aa)) is the Ig-like 2 domain. The span at 403 to 433 (LQSTSADHKLQSRRSGKDGRLDIYGERRDAT) shows a compositional bias: basic and acidic residues. Residues 403-454 (LQSTSADHKLQSRRSGKDGRLDIYGERRDATRSSTSRYKPGTGSFSKDAQGP) form a disordered region. Residues 434-449 (RSSTSRYKPGTGSFSK) show a composition bias toward polar residues. Residues 454-539 (PMGHFSQGLA…GDQQSEATLT (86 aa)) form the Ig-like 3 domain. 3 Fibronectin type-III domains span residues 646-741 (PPQG…VAPE), 746-845 (APSA…MRPP), and 847-942 (LVRN…AMPV). Residues 946 to 1030 (PKFLVDSSTK…LRTLQGKEVA (85 aa)) form the Ig-like 4 domain. One can recognise a Fibronectin type-III 4 domain in the interval 1043 to 1137 (APGPIHLQEN…TSQPWCIPRQ (95 aa)). The Ig-like 5 domain maps to 1151–1245 (PDLSQKPRFL…GQAVSTATLI (95 aa)).

Interacts with FLNC. Interacts with KY. In terms of tissue distribution, expressed in skeletal muscle.

It is found in the nucleus. The protein localises to the cytoplasm. Its subcellular location is the myofibril. It localises to the sarcomere. The protein resides in the z line. In Homo sapiens (Human), this protein is Immunoglobulin-like and fibronectin type III domain-containing protein 1 (IGFN1).